Reading from the N-terminus, the 193-residue chain is Orotate phosphoribosyltransferase (193 aa).

Residues arginine 102, lysine 103, lysine 106, histidine 108, and 129–137 (EDVVTTGGS) each bind 5-phospho-alpha-D-ribose 1-diphosphate. 2 residues coordinate orotate: threonine 133 and arginine 161.

This sequence belongs to the purine/pyrimidine phosphoribosyltransferase family. PyrE subfamily. Homodimer. It depends on Mg(2+) as a cofactor.

It catalyses the reaction orotidine 5'-phosphate + diphosphate = orotate + 5-phospho-alpha-D-ribose 1-diphosphate. The protein operates within pyrimidine metabolism; UMP biosynthesis via de novo pathway; UMP from orotate: step 1/2. Functionally, catalyzes the transfer of a ribosyl phosphate group from 5-phosphoribose 1-diphosphate to orotate, leading to the formation of orotidine monophosphate (OMP). This chain is Orotate phosphoribosyltransferase, found in Prochlorococcus marinus (strain NATL1A).